The primary structure comprises 695 residues: WD repeat-containing protein 93 (695 aa).

Residues 1 to 35 (MSSFKGNQAQKRRLSVFPKGPLEIPSPTEADWPKD) are disordered. The WD repeat unit spans residues 421-460 (PCAAPIVMSQISSFSSYLALVCEDGVLILWDLAEGFLFGV).

Testis-specific. Expressed in spermatogonia, spermatocytes and spermatids.

The sequence is that of WD repeat-containing protein 93 (Wdr93) from Mus musculus (Mouse).